Reading from the N-terminus, the 213-residue chain is MGSYHYTSTSHFFFAGGGEGEYSSYKGTGSTDTHRPTTVRIPVTTPGPERPPDDAAAARIQAAFRGHLVRRHAAAVRGADDEATRLERLLRRQETVDAVRGDERERARFSEALMAVLLRLDAVPGYYPAVREARRAVTRRVVGLQEVFDAVLAAPDAADTCGVPASLDQVLEGIWGESPAAPPPPPPPPPPAAVEVEEEVVRSPCWRRFFGGV.

The IQ domain maps to 53 to 82; that stretch reads DDAAAARIQAAFRGHLVRRHAAAVRGADDE. Residues 75 to 152 form the BAG domain; it reads AVRGADDEAT…GLQEVFDAVL (78 aa).

Interacts with CAM1-1 under normal conditions. Dissociation of the interaction when calcium-CAM1-1 binding increases under saline-alkaline stress.

It is found in the mitochondrion. Its function is as follows. Co-chaperone that regulates stress responses. Acts as a negative regulator of saline-alkaline stress tolerance. May participate in stress response through regulating the homeostasis of iron, manganese and zinc ions. This is BAG family molecular chaperone regulator 6, mitochondrial from Oryza sativa subsp. japonica (Rice).